We begin with the raw amino-acid sequence, 222 residues long: NADH dehydrogenase [ubiquinone] iron-sulfur protein 8-A, mitochondrial (222 aa).

2 4Fe-4S ferredoxin-type domains span residues 114–143 (RRYP…IEAE) and 153–182 (TRYD…EGPN). Residues C123, C126, C129, C133, C162, C165, C168, and C172 each contribute to the [4Fe-4S] cluster site.

The protein belongs to the complex I 23 kDa subunit family. In terms of assembly, complex I is composed of at least 49 different subunits. This is a component of the iron-sulfur (IP) fragment of the enzyme. [4Fe-4S] cluster serves as cofactor.

It localises to the mitochondrion. The enzyme catalyses a ubiquinone + NADH + 5 H(+)(in) = a ubiquinol + NAD(+) + 4 H(+)(out). In terms of biological role, core subunit of the mitochondrial membrane respiratory chain NADH dehydrogenase (Complex I) that is believed to belong to the minimal assembly required for catalysis. Complex I functions in the transfer of electrons from NADH to the respiratory chain. The immediate electron acceptor for the enzyme is believed to be ubiquinone. May donate electrons to ubiquinone. The sequence is that of NADH dehydrogenase [ubiquinone] iron-sulfur protein 8-A, mitochondrial from Arabidopsis thaliana (Mouse-ear cress).